A 111-amino-acid polypeptide reads, in one-letter code: Small ribosomal subunit protein uS17 (111 aa).

Belongs to the universal ribosomal protein uS17 family. In terms of assembly, part of the 30S ribosomal subunit.

One of the primary rRNA binding proteins, it binds specifically to the 5'-end of 16S ribosomal RNA. This is Small ribosomal subunit protein uS17 from Methanocella arvoryzae (strain DSM 22066 / NBRC 105507 / MRE50).